The sequence spans 438 residues: Putative ZDHHC-type palmitoyltransferase 7 (438 aa).

Residues Asn-12 and Asn-13 are each glycosylated (N-linked (GlcNAc...) asparagine). Transmembrane regions (helical) follow at residues 48 to 68 (IFCLVHFIVYCVIIFRKGTIL) and 77 to 97 (YFYLIWTHCVFFFAIGTYFLI). N-linked (GlcNAc...) asparagine glycans are attached at residues Asn-119, Asn-144, and Asn-157. Positions 183–239 (EDSINDDTITTTTTTTTTTSTSTIPEISNDDDDNNNENNNDNVNNRNNNNSNGEKED) are disordered. 2 stretches are compositionally biased toward low complexity: residues 190–206 (TITTTTTTTTTTSTSTI) and 218–234 (NENNNDNVNNRNNNNSN). The N-linked (GlcNAc...) asparagine glycan is linked to Asn-231. A DHHC domain is found at 249–299 (YFCKKCLVDIPLRTKHCVKCNRCVLKYDHHCVFIGGCVGLNNHKNFLLFLL). 2 helical membrane passes run 294–314 (FLLFLLAESLLLLLGLRIIVT) and 330–350 (IAIIPPTLLIFGGLCMPFALF). Asn-360 carries an N-linked (GlcNAc...) asparagine glycan.

This sequence belongs to the DHHC palmitoyltransferase family.

The protein resides in the membrane. The catalysed reaction is L-cysteinyl-[protein] + hexadecanoyl-CoA = S-hexadecanoyl-L-cysteinyl-[protein] + CoA. The protein is Putative ZDHHC-type palmitoyltransferase 7 of Dictyostelium discoideum (Social amoeba).